The sequence spans 354 residues: MNKKILFTGGGTAGHVMINMVLIPKFMGKGWGVEYIGSQNGIEKLLVQNVKYNSISTGKLRRYWDWENFKDPFKIIKGCIQSYKLMKRIKPDVIFSAGGFVSVPVVIGAWMNKVPVIIREPDSTLGLANKIALPFTTKLCTTFPQTGENVSNEKKVYVGPIVREEIERGNVLRGRSYCKFQQDKPVLLIMGGSQGAQWINDMVRGSLETLLLNFNIVHMCGKGKVDSSIGMEGYIQFEYIGEELPHILNMASVVVSRAGSTAIFELLFLKKPMLLIPLTNSSSRGDQVLNAEYFSRQGYAEVILQDRVSTNTFIHAVNKLNTNKERYIQNMNGYTKTNDEGIHQLIDIINEVVK.

Residues 12–14 (TAG), R163, S193, and Q287 each bind UDP-N-acetyl-alpha-D-glucosamine.

Belongs to the glycosyltransferase 28 family. MurG subfamily.

It is found in the cell membrane. It catalyses the reaction di-trans,octa-cis-undecaprenyl diphospho-N-acetyl-alpha-D-muramoyl-L-alanyl-D-glutamyl-meso-2,6-diaminopimeloyl-D-alanyl-D-alanine + UDP-N-acetyl-alpha-D-glucosamine = di-trans,octa-cis-undecaprenyl diphospho-[N-acetyl-alpha-D-glucosaminyl-(1-&gt;4)]-N-acetyl-alpha-D-muramoyl-L-alanyl-D-glutamyl-meso-2,6-diaminopimeloyl-D-alanyl-D-alanine + UDP + H(+). The protein operates within cell wall biogenesis; peptidoglycan biosynthesis. Cell wall formation. Catalyzes the transfer of a GlcNAc subunit on undecaprenyl-pyrophosphoryl-MurNAc-pentapeptide (lipid intermediate I) to form undecaprenyl-pyrophosphoryl-MurNAc-(pentapeptide)GlcNAc (lipid intermediate II). In Bacillus thuringiensis (strain Al Hakam), this protein is UDP-N-acetylglucosamine--N-acetylmuramyl-(pentapeptide) pyrophosphoryl-undecaprenol N-acetylglucosamine transferase 1.